Consider the following 331-residue polypeptide: Cysteine and histidine-rich domain-containing protein 1 (331 aa).

Positions 5, 10, 24, 27, 42, 43, 59, 64, 157, 162, 176, 179, 194, 195, 211, and 216 each coordinate Zn(2+). 2 consecutive CHORD domains span residues 5–64 (CYNR…KGLH) and 157–216 (CKNA…TGTH). Positions 227 to 316 (VVPCRHDWHQ…AEPLLWASLE (90 aa)) constitute a CS domain.

Regulates centrosome duplication. The protein is Cysteine and histidine-rich domain-containing protein 1 (CHORDC1) of Gallus gallus (Chicken).